A 72-amino-acid polypeptide reads, in one-letter code: Cytochrome c oxidase subunit 8C, mitochondrial (72 aa).

The transit peptide at 1–29 (MSRLLLLCSSLLRHRAVLFSKPGHPGRLS) directs the protein to the mitochondrion. Residues 30-40 (HSESPQKKILS) are Mitochondrial matrix-facing. Residues 41-64 (PTESAVGIVVFFTTFYIPAAYVLS) form a helical membrane-spanning segment. Residues 65–72 (SLKYFKGE) are Mitochondrial intermembrane-facing.

It belongs to the cytochrome c oxidase VIII family. Component of the cytochrome c oxidase (complex IV, CIV), a multisubunit enzyme composed of 14 subunits. The complex is composed of a catalytic core of 3 subunits MT-CO1, MT-CO2 and MT-CO3, encoded in the mitochondrial DNA, and 11 supernumerary subunits COX4I, COX5A, COX5B, COX6A, COX6B, COX6C, COX7A, COX7B, COX7C, COX8 and NDUFA4, which are encoded in the nuclear genome. The complex exists as a monomer or a dimer and forms supercomplexes (SCs) in the inner mitochondrial membrane with NADH-ubiquinone oxidoreductase (complex I, CI) and ubiquinol-cytochrome c oxidoreductase (cytochrome b-c1 complex, complex III, CIII), resulting in different assemblies (supercomplex SCI(1)III(2)IV(1) and megacomplex MCI(2)III(2)IV(2)).

The protein localises to the mitochondrion inner membrane. It participates in energy metabolism; oxidative phosphorylation. Its function is as follows. Component of the cytochrome c oxidase, the last enzyme in the mitochondrial electron transport chain which drives oxidative phosphorylation. The respiratory chain contains 3 multisubunit complexes succinate dehydrogenase (complex II, CII), ubiquinol-cytochrome c oxidoreductase (cytochrome b-c1 complex, complex III, CIII) and cytochrome c oxidase (complex IV, CIV), that cooperate to transfer electrons derived from NADH and succinate to molecular oxygen, creating an electrochemical gradient over the inner membrane that drives transmembrane transport and the ATP synthase. Cytochrome c oxidase is the component of the respiratory chain that catalyzes the reduction of oxygen to water. Electrons originating from reduced cytochrome c in the intermembrane space (IMS) are transferred via the dinuclear copper A center (CU(A)) of subunit 2 and heme A of subunit 1 to the active site in subunit 1, a binuclear center (BNC) formed by heme A3 and copper B (CU(B)). The BNC reduces molecular oxygen to 2 water molecules using 4 electrons from cytochrome c in the IMS and 4 protons from the mitochondrial matrix. The sequence is that of Cytochrome c oxidase subunit 8C, mitochondrial (Cox8c) from Mus musculus (Mouse).